Here is a 404-residue protein sequence, read N- to C-terminus: 5-aminolevulinate synthase (404 aa).

Substrate is bound by residues Arg21 and Ser136. Pyridoxal 5'-phosphate is bound by residues Ser188, His216, and Thr244. The active site involves Lys247. Lys247 carries the N6-(pyridoxal phosphate)lysine modification. Pyridoxal 5'-phosphate is bound by residues Thr276 and Thr277. Thr362 serves as a coordination point for substrate.

Belongs to the class-II pyridoxal-phosphate-dependent aminotransferase family. In terms of assembly, homodimer. It depends on pyridoxal 5'-phosphate as a cofactor.

The catalysed reaction is succinyl-CoA + glycine + H(+) = 5-aminolevulinate + CO2 + CoA. Its pathway is porphyrin-containing compound metabolism; protoporphyrin-IX biosynthesis; 5-aminolevulinate from glycine: step 1/1. The chain is 5-aminolevulinate synthase (hemA) from Rhizobium meliloti (strain 1021) (Ensifer meliloti).